A 159-amino-acid polypeptide reads, in one-letter code: SsrA-binding protein (159 aa).

It belongs to the SmpB family.

The protein resides in the cytoplasm. In terms of biological role, required for rescue of stalled ribosomes mediated by trans-translation. Binds to transfer-messenger RNA (tmRNA), required for stable association of tmRNA with ribosomes. tmRNA and SmpB together mimic tRNA shape, replacing the anticodon stem-loop with SmpB. tmRNA is encoded by the ssrA gene; the 2 termini fold to resemble tRNA(Ala) and it encodes a 'tag peptide', a short internal open reading frame. During trans-translation Ala-aminoacylated tmRNA acts like a tRNA, entering the A-site of stalled ribosomes, displacing the stalled mRNA. The ribosome then switches to translate the ORF on the tmRNA; the nascent peptide is terminated with the 'tag peptide' encoded by the tmRNA and targeted for degradation. The ribosome is freed to recommence translation, which seems to be the essential function of trans-translation. The protein is SsrA-binding protein of Acidiphilium cryptum (strain JF-5).